The chain runs to 187 residues: dTTP/UTP pyrophosphatase (187 aa).

D65 functions as the Proton acceptor in the catalytic mechanism.

This sequence belongs to the Maf family. YhdE subfamily. Requires a divalent metal cation as cofactor.

Its subcellular location is the cytoplasm. It carries out the reaction dTTP + H2O = dTMP + diphosphate + H(+). It catalyses the reaction UTP + H2O = UMP + diphosphate + H(+). In terms of biological role, nucleoside triphosphate pyrophosphatase that hydrolyzes dTTP and UTP. May have a dual role in cell division arrest and in preventing the incorporation of modified nucleotides into cellular nucleic acids. This is dTTP/UTP pyrophosphatase from Deinococcus geothermalis (strain DSM 11300 / CIP 105573 / AG-3a).